Here is a 755-residue protein sequence, read N- to C-terminus: Xaa-Pro dipeptidyl-peptidase (755 aa).

Residues Ser348, Asp468, and His498 each act as charge relay system in the active site.

This sequence belongs to the peptidase S15 family. Homodimer.

It is found in the cytoplasm. It catalyses the reaction Hydrolyzes Xaa-Pro-|- bonds to release unblocked, N-terminal dipeptides from substrates including Ala-Pro-|-p-nitroanilide and (sequentially) Tyr-Pro-|-Phe-Pro-|-Gly-Pro-|-Ile.. Its function is as follows. Removes N-terminal dipeptides sequentially from polypeptides having unsubstituted N-termini provided that the penultimate residue is proline. This chain is Xaa-Pro dipeptidyl-peptidase, found in Streptococcus thermophilus (strain ATCC BAA-250 / LMG 18311).